We begin with the raw amino-acid sequence, 385 residues long: Calcium/calmodulin-dependent protein kinase type 1D (385 aa).

In terms of domain architecture, Protein kinase spans 23 to 279; sequence FEFKETLGTG…CEQAARHPWI (257 aa). ATP contacts are provided by residues 29-37 and lysine 52; that span reads LGTGAFSEV. A Glycyl lysine isopeptide (Lys-Gly) (interchain with G-Cter in SUMO2) cross-link involves residue lysine 113. The residue at position 122 (serine 122) is a Phosphoserine. The active-site Proton acceptor is the aspartate 144. Threonine 180 is subject to Phosphothreonine; by CaMKK1 and CaMKK2. Positions 279–319 are autoinhibitory domain; sequence IAGDTALSKNIHESVSAQIRKNFAKSKWRQAFNATAVVRHM. Positions 299 to 320 are calmodulin-binding; it reads KNFAKSKWRQAFNATAVVRHMR. The Nuclear export signal signature appears at 318–324; that stretch reads HMRRLQL. The disordered stretch occupies residues 363–385; the sequence is VAGVGAERRPRPTTVTTGHTGSK. Residues 375 to 385 show a composition bias toward polar residues; sequence TTVTTGHTGSK.

The protein belongs to the protein kinase superfamily. CAMK Ser/Thr protein kinase family. CaMK subfamily. As to expression, expressed ubiquitously with high levels in brain and low levels in kidney. Isoform 2 is highly expressed in brain compared to other tissues. In hematopoietic cell lines predominant expression was detected in T and EC cells.

It localises to the cytoplasm. The protein localises to the nucleus. The catalysed reaction is L-seryl-[protein] + ATP = O-phospho-L-seryl-[protein] + ADP + H(+). It carries out the reaction L-threonyl-[protein] + ATP = O-phospho-L-threonyl-[protein] + ADP + H(+). With respect to regulation, activated by Ca(2+)/calmodulin. Binding of calmodulin results in conformational change that relieves intrasteric autoinhibition and allows phosphorylation of Thr-180 within the activation loop by CaMKK1 or CaMKK2. Phosphorylation of Thr-180 results in several fold increase in total activity. Unlike CaMK4, may be unable to exhibit autonomous activity after Ca(2+)/calmodulin activation. Its function is as follows. Calcium/calmodulin-dependent protein kinase that operates in the calcium-triggered CaMKK-CaMK1 signaling cascade and, upon calcium influx, activates CREB-dependent gene transcription, regulates calcium-mediated granulocyte function and respiratory burst and promotes basal dendritic growth of hippocampal neurons. In neutrophil cells, required for cytokine-induced proliferative responses and activation of the respiratory burst. Activates the transcription factor CREB1 in hippocampal neuron nuclei. May play a role in apoptosis of erythroleukemia cells. In vitro, phosphorylates transcription factor CREM isoform Beta. Isoform 1 but not isoform 2 activates CREB1. This is Calcium/calmodulin-dependent protein kinase type 1D (Camk1d) from Mus musculus (Mouse).